Reading from the N-terminus, the 701-residue chain is DNA ligase 2 (701 aa).

Polar residues predominate over residues 1-10 (MSPAPQNRQP). Positions 1 to 21 (MSPAPQNRQPSGVPVGGQFAA) are disordered. NAD(+) is bound by residues 64-68 (DAEFD), 111-112 (SL), and E133. The active-site N6-AMP-lysine intermediate is the K135. NAD(+) is bound by residues R156, E189, K302, and K326. Zn(2+) contacts are provided by C420, C423, C436, and C441. The segment covering 603-613 (KAAPAAGAKAP) has biased composition (low complexity). The segment at 603 to 623 (KAAPAAGAKAPKLTKPDGKPM) is disordered. The BRCT domain maps to 615-701 (LTKPDGKPMN…FAQMVEDGEV (87 aa)).

The protein belongs to the NAD-dependent DNA ligase family. LigA subfamily. Mg(2+) is required as a cofactor. The cofactor is Mn(2+).

The enzyme catalyses NAD(+) + (deoxyribonucleotide)n-3'-hydroxyl + 5'-phospho-(deoxyribonucleotide)m = (deoxyribonucleotide)n+m + AMP + beta-nicotinamide D-nucleotide.. Functionally, DNA ligase that catalyzes the formation of phosphodiester linkages between 5'-phosphoryl and 3'-hydroxyl groups in double-stranded DNA using NAD as a coenzyme and as the energy source for the reaction. It is essential for DNA replication and repair of damaged DNA. This is DNA ligase 2 from Pseudarthrobacter chlorophenolicus (strain ATCC 700700 / DSM 12829 / CIP 107037 / JCM 12360 / KCTC 9906 / NCIMB 13794 / A6) (Arthrobacter chlorophenolicus).